The chain runs to 317 residues: Transaldolase (317 aa).

Lysine 125 acts as the Schiff-base intermediate with substrate in catalysis.

This sequence belongs to the transaldolase family. Type 1 subfamily. Homodimer.

It localises to the cytoplasm. The catalysed reaction is D-sedoheptulose 7-phosphate + D-glyceraldehyde 3-phosphate = D-erythrose 4-phosphate + beta-D-fructose 6-phosphate. The protein operates within carbohydrate degradation; pentose phosphate pathway; D-glyceraldehyde 3-phosphate and beta-D-fructose 6-phosphate from D-ribose 5-phosphate and D-xylulose 5-phosphate (non-oxidative stage): step 2/3. In terms of biological role, transaldolase is important for the balance of metabolites in the pentose-phosphate pathway. The sequence is that of Transaldolase from Delftia acidovorans (strain DSM 14801 / SPH-1).